A 237-amino-acid polypeptide reads, in one-letter code: uncharacterized protein (237 aa).

Residues Glu-91, Glu-93, and Asp-122 each contribute to the a divalent metal cation site.

Belongs to the FAH family.

This is an uncharacterized protein from Methanocaldococcus jannaschii (strain ATCC 43067 / DSM 2661 / JAL-1 / JCM 10045 / NBRC 100440) (Methanococcus jannaschii).